The following is a 406-amino-acid chain: Glucose-6-phosphate isomerase (406 aa).

Glutamate 259 functions as the Proton donor in the catalytic mechanism. Catalysis depends on residues histidine 284 and lysine 397.

Belongs to the GPI family.

The protein resides in the cytoplasm. It catalyses the reaction alpha-D-glucose 6-phosphate = beta-D-fructose 6-phosphate. The protein operates within carbohydrate biosynthesis; gluconeogenesis. It functions in the pathway carbohydrate degradation; glycolysis; D-glyceraldehyde 3-phosphate and glycerone phosphate from D-glucose: step 2/4. Functionally, catalyzes the reversible isomerization of glucose-6-phosphate to fructose-6-phosphate. The chain is Glucose-6-phosphate isomerase from Campylobacter jejuni subsp. jejuni serotype O:2 (strain ATCC 700819 / NCTC 11168).